The following is a 249-amino-acid chain: uncharacterized protein (249 aa).

Residue 7–14 participates in ATP binding; it reads GKGGCGKS.

This is an uncharacterized protein from Methanocaldococcus jannaschii (strain ATCC 43067 / DSM 2661 / JAL-1 / JCM 10045 / NBRC 100440) (Methanococcus jannaschii).